The primary structure comprises 213 residues: Orotate phosphoribosyltransferase (213 aa).

Residue Lys26 coordinates 5-phospho-alpha-D-ribose 1-diphosphate. 34–35 contacts orotate; the sequence is FF. Residues 72 to 73, Arg99, Lys100, Lys103, His105, and 124 to 132 each bind 5-phospho-alpha-D-ribose 1-diphosphate; these read YK and DDVITAGTA. Positions 128 and 156 each coordinate orotate.

This sequence belongs to the purine/pyrimidine phosphoribosyltransferase family. PyrE subfamily. Homodimer. Requires Mg(2+) as cofactor.

It catalyses the reaction orotidine 5'-phosphate + diphosphate = orotate + 5-phospho-alpha-D-ribose 1-diphosphate. Its pathway is pyrimidine metabolism; UMP biosynthesis via de novo pathway; UMP from orotate: step 1/2. Catalyzes the transfer of a ribosyl phosphate group from 5-phosphoribose 1-diphosphate to orotate, leading to the formation of orotidine monophosphate (OMP). In Photobacterium profundum (strain SS9), this protein is Orotate phosphoribosyltransferase.